A 78-amino-acid polypeptide reads, in one-letter code: Large ribosomal subunit protein bL28 (78 aa).

A disordered region spans residues 1 to 21 (MSRVCQVTGKRPVSGNNRSHA).

This sequence belongs to the bacterial ribosomal protein bL28 family.

In Serratia proteamaculans (strain 568), this protein is Large ribosomal subunit protein bL28.